A 310-amino-acid chain; its full sequence is Dihydroorotate dehydrogenase B (NAD(+)), catalytic subunit (310 aa).

Residues Ser19 and Lys43–Ala44 each bind FMN. Substrate-binding positions include Lys43 and Asn67–Leu71. FMN contacts are provided by Asn97 and Asn125. Residue Asn125 participates in substrate binding. The active-site Nucleophile is the Cys128. Lys163 and Ile189 together coordinate FMN. Asn190–Thr191 contributes to the substrate binding site. Residues Gly215, Gly241–Gly242, and Gly263–Thr264 each bind FMN.

This sequence belongs to the dihydroorotate dehydrogenase family. Type 1 subfamily. In terms of assembly, heterotetramer of 2 PyrK and 2 PyrD type B subunits. Requires FMN as cofactor.

It localises to the cytoplasm. It carries out the reaction (S)-dihydroorotate + NAD(+) = orotate + NADH + H(+). The protein operates within pyrimidine metabolism; UMP biosynthesis via de novo pathway; orotate from (S)-dihydroorotate (NAD(+) route): step 1/1. Functionally, catalyzes the conversion of dihydroorotate to orotate with NAD(+) as electron acceptor. The protein is Dihydroorotate dehydrogenase B (NAD(+)), catalytic subunit (pyrD) of Bacillus pumilus (strain SAFR-032).